Reading from the N-terminus, the 339-residue chain is MIRAGIIGATGYTGLELVRLLKNHPEAKITYLSSRTYAGKKLEEIFPSTLENSILSEFDPEKVSKNCDVLFTALPAGASYDLVRELKGVKIIDLGADFRFDDPGVYREWYGKELSGYENIKRVYGLPELHREEIKNAQVVGNPGCYPTSVILALAPALKHNLVDPETILVDAKSGVSGAGRKEKVDYLFSEVNESLRPYNVAKHRHVPEMEQELGKISGKKVNVVFTPHLVPMTRGILSTIYVKTDKSLEEIHEAYLEFYKNEPFVHVLPMGIYPSTKWCYGSNHVFIGMQMEERTNTLILMSAIDNLVKGASGQAVQNMNIMFGLDETKGLEFTPIYP.

The active site involves Cys-145.

Belongs to the NAGSA dehydrogenase family. Type 1 subfamily.

It is found in the cytoplasm. It catalyses the reaction N-acetyl-L-glutamate 5-semialdehyde + phosphate + NADP(+) = N-acetyl-L-glutamyl 5-phosphate + NADPH + H(+). It functions in the pathway amino-acid biosynthesis; L-arginine biosynthesis; N(2)-acetyl-L-ornithine from L-glutamate: step 3/4. Functionally, catalyzes the NADPH-dependent reduction of N-acetyl-5-glutamyl phosphate to yield N-acetyl-L-glutamate 5-semialdehyde. The chain is N-acetyl-gamma-glutamyl-phosphate reductase from Thermotoga maritima (strain ATCC 43589 / DSM 3109 / JCM 10099 / NBRC 100826 / MSB8).